We begin with the raw amino-acid sequence, 183 residues long: MDPSQNPNVVHATTIISVRRGGHVAVAGDGQVTLGHTVMKGNARKVRRLGRDGQVLAGFAGAAADAFTLFELFEAKLDKHGQLTRAAVELAKDWRTERRLGKLEALLAVADKETSLIISGTGDVIEPEDGIIAIGSGGSYALSAARALLAHTELDAKTIATEAINIAGDICIYTNRNVVVEEL.

The active site involves T13. The Na(+) site is built by G168, C171, and T174.

Belongs to the peptidase T1B family. HslV subfamily. A double ring-shaped homohexamer of HslV is capped on each side by a ring-shaped HslU homohexamer. The assembly of the HslU/HslV complex is dependent on binding of ATP.

The protein resides in the cytoplasm. The enzyme catalyses ATP-dependent cleavage of peptide bonds with broad specificity.. Allosterically activated by HslU binding. Its function is as follows. Protease subunit of a proteasome-like degradation complex believed to be a general protein degrading machinery. In Xanthomonas campestris pv. campestris (strain ATCC 33913 / DSM 3586 / NCPPB 528 / LMG 568 / P 25), this protein is ATP-dependent protease subunit HslV.